A 343-amino-acid chain; its full sequence is uncharacterized protein (343 aa).

33 to 40 (GPKSSGKS) contributes to the ATP binding site.

The protein belongs to the archaeal ATPase family.

This is an uncharacterized protein from Methanocaldococcus jannaschii (strain ATCC 43067 / DSM 2661 / JAL-1 / JCM 10045 / NBRC 100440) (Methanococcus jannaschii).